Consider the following 392-residue polypeptide: uncharacterized protein (392 aa).

A J domain is found at T7 to E76. Position 108 is a phosphoserine (S108).

This is an uncharacterized protein from Schizosaccharomyces pombe (strain 972 / ATCC 24843) (Fission yeast).